The primary structure comprises 34 residues: Potassium channel toxin alpha-KTx 18.2 (34 aa).

Intrachain disulfides connect Cys-7–Cys-26, Cys-12–Cys-31, and Cys-16–Cys-33.

Expressed by the venom gland.

The protein resides in the secreted. Reversibly blocks Shaker B potassium channels. The chain is Potassium channel toxin alpha-KTx 18.2 from Tityus discrepans (Venezuelan scorpion).